Reading from the N-terminus, the 570-residue chain is MLGVIQYSILTIFWLPIAAAXLYGAGLAIYRLFLSPLAKFPGPKLAALTRKYESYYEAYQNYEYYWKIKELHKQYGELFTPLTASFXRXGPIVRVNPHELHIDDKDFYYKLNSFQGAWNKDPYTAHQFANPGSIVGTIDHDIHRKRRAAIMPFFSKQKIYALESVIQGMVDKLCYRIEEYGKTGQPVNLRNASKCFAADVVGEYCFAESGGLXDKPDFAIEEMNQQQQGLKAGLRARYLPSWWMPVVRGAPAWIRASIDPAAKHFEVWHRVSDSLFVRLYDARKXGPVGRMEKRKNDEFYEKAGHRTIFHELINSPHLPPEEKGTGRIIQEAGAMVGAGGESTSQVITAFVYCLLANPQVLSRLREELRSVIPNADSPAPTLRQLEALPYLVGPLLXSTYKYVGYLLTLVARLRTGKIARHQRVPRDRPLYFNEWEIPAGVSXHEDNIPMASTDTAQTICSMTPIFLQIDPEVYPNPHAFMPERWLNLDEXQRQRLEHNLVPYSKGTRGCAGLTLANAELYMLIPALVTRFDLELFDSDAWDTEMAVDSHHHSPRPDSKGVKVFVKKSTF.

Residues 9–29 (ILTIFWLPIAAAXLYGAGLAI) form a helical membrane-spanning segment. A glycan (N-linked (GlcNAc...) asparagine) is linked at asparagine 191. Cysteine 510 serves as a coordination point for heme.

The protein belongs to the cytochrome P450 family. Heme is required as a cofactor.

It is found in the membrane. It participates in secondary metabolite biosynthesis. Functionally, non-reducing polyketide synthase; part of the gene cluster that mediates the biosynthesis of orcinol depsidone grayanic acid (GRA), the only major secondary metabolite known in C.grayi. The first step consists in the ring and depside synthesis by PKS16 leading to 4-O-demethylsphaerophorin, involving different orcinol-like rings, one with acetyl CoA and the other with octanoyl CoA as the starter. Further depsidone formation by the GRA cluster-specific cytochrome P450 leads to 4-O-demethylgrayanic acid. Finally, the cluster specific O-methyltransferase probably converts the 4-O-demethylgrayanic acid into grayanic acid. The chain is Grayanic acid biosynthesis cluster cytochrome P450 monooxygenase from Cladonia grayi (Gray's cup lichen).